The following is a 539-amino-acid chain: Polyol transporter 5 (539 aa).

A compositionally biased stretch (polar residues) spans 1–11; it reads MTGATPENRTA. A disordered region spans residues 1 to 24; the sequence is MTGATPENRTAPSPPPVKHVPESV. The next 12 helical transmembrane spans lie at 37–57, 73–93, 104–124, 127–147, 165–185, 196–216, 296–316, 333–353, 364–384, 391–411, 433–453, and 463–483; these read FACA…IGVM, LQIG…SCAA, YTIV…GLSP, AFLM…LMIA, SFPE…NLAF, LMLG…LAMP, IAAI…VVLF, LLAT…ATFL, LTSV…LTII, VMWA…TFSI, GSSM…ISFL, and GAFY…YTFL. 2 stretches are compositionally biased toward basic and acidic residues: residues 503–514 and 530–539; these read WRDSKSKPKGNP and QWKEGDTQSS. The tract at residues 503–539 is disordered; it reads WRDSKSKPKGNPEKTVPNPEVEIGSNKQWKEGDTQSS.

The protein belongs to the major facilitator superfamily. Sugar transporter (TC 2.A.1.1) family. As to expression, highly expressed in roots. Expressed in vascular tissue of leaves, sepals and siliques.

The protein localises to the cell membrane. Functionally, plasma membrane broad-spectrum sugar-proton symporter. Mediates the uptake of linear polyols such as sorbitol, xylitol, erythritol or glycerol. Can transport the cyclic polyol myo-inositol and different hexoses, pentoses (including ribose), tetroses and sugar alcohols. The chain is Polyol transporter 5 (PLT5) from Arabidopsis thaliana (Mouse-ear cress).